The sequence spans 142 residues: Hemoglobin subunit alpha (142 aa).

The region spanning valine 2–arginine 142 is the Globin domain. A Phosphoserine modification is found at serine 4. Lysine 8 is subject to N6-succinyllysine. Threonine 9 carries the phosphothreonine modification. Lysine 12 is subject to N6-succinyllysine. Lysine 17 carries the N6-acetyllysine; alternate modification. At lysine 17 the chain carries N6-succinyllysine; alternate. Tyrosine 25 carries the post-translational modification Phosphotyrosine. The residue at position 36 (serine 36) is a Phosphoserine. Lysine 41 carries the post-translational modification N6-succinyllysine. Serine 50 carries the phosphoserine modification. Histidine 59 is a binding site for O2. Residue histidine 88 participates in heme b binding. Phosphoserine is present on serine 103. Residue threonine 109 is modified to Phosphothreonine. The residue at position 125 (serine 125) is a Phosphoserine. 2 positions are modified to phosphothreonine: threonine 135 and threonine 138. Serine 139 bears the Phosphoserine mark.

Belongs to the globin family. As to quaternary structure, heterotetramer of two alpha chains and two beta chains. In terms of tissue distribution, red blood cells.

Functionally, involved in oxygen transport from the lung to the various peripheral tissues. In terms of biological role, hemopressin acts as an antagonist peptide of the cannabinoid receptor CNR1. Hemopressin-binding efficiently blocks cannabinoid receptor CNR1 and subsequent signaling. This is Hemoglobin subunit alpha (HBA) from Ailurus fulgens (Himalayan red panda).